Reading from the N-terminus, the 418-residue chain is Serine hydroxymethyltransferase (418 aa).

Residues Leu-121 and 125-127 each bind (6S)-5,6,7,8-tetrahydrofolate; that span reads GHL. Position 230 is an N6-(pyridoxal phosphate)lysine (Lys-230). (6S)-5,6,7,8-tetrahydrofolate is bound by residues Glu-246 and 355 to 357; that span reads SPF.

It belongs to the SHMT family. As to quaternary structure, homodimer. Pyridoxal 5'-phosphate is required as a cofactor.

The protein localises to the cytoplasm. It carries out the reaction (6R)-5,10-methylene-5,6,7,8-tetrahydrofolate + glycine + H2O = (6S)-5,6,7,8-tetrahydrofolate + L-serine. It participates in one-carbon metabolism; tetrahydrofolate interconversion. It functions in the pathway amino-acid biosynthesis; glycine biosynthesis; glycine from L-serine: step 1/1. Functionally, catalyzes the reversible interconversion of serine and glycine with tetrahydrofolate (THF) serving as the one-carbon carrier. This reaction serves as the major source of one-carbon groups required for the biosynthesis of purines, thymidylate, methionine, and other important biomolecules. Also exhibits THF-independent aldolase activity toward beta-hydroxyamino acids, producing glycine and aldehydes, via a retro-aldol mechanism. In Streptococcus pneumoniae serotype 4 (strain ATCC BAA-334 / TIGR4), this protein is Serine hydroxymethyltransferase.